The following is an 868-amino-acid chain: Protein translocase subunit SecA (868 aa).

Residues Gln-88, 106–110 (GEGKT), and Asp-509 each bind ATP. Residues 816-827 (NAENEPLNYNNQ) are compositionally biased toward polar residues. Residues 816–868 (NAENEPLNYNNQGEDENFTPEKKIPRNAPCPCGSGKKYKDCHGKSGPKKGIFA) form a disordered region. Zn(2+) contacts are provided by Cys-845, Cys-847, Cys-856, and His-857.

Belongs to the SecA family. Monomer and homodimer. Part of the essential Sec protein translocation apparatus which comprises SecA, SecYEG and auxiliary proteins SecDF-YajC and YidC. Zn(2+) serves as cofactor.

It localises to the cell inner membrane. The protein localises to the cytoplasm. It catalyses the reaction ATP + H2O + cellular proteinSide 1 = ADP + phosphate + cellular proteinSide 2.. In terms of biological role, part of the Sec protein translocase complex. Interacts with the SecYEG preprotein conducting channel. Has a central role in coupling the hydrolysis of ATP to the transfer of proteins into and across the cell membrane, serving as an ATP-driven molecular motor driving the stepwise translocation of polypeptide chains across the membrane. The polypeptide is Protein translocase subunit SecA (Campylobacter concisus (strain 13826)).